Consider the following 495-residue polypeptide: Probable staphylococcal-like nuclease CAN4 (495 aa).

The N-myristoyl glycine moiety is linked to residue glycine 2. Cysteine 11 carries the S-palmitoyl cysteine lipid modification. 2 disordered regions span residues 45 to 68 (DLQVPLSPPPPSTRQQQPPPRPAL) and 81 to 101 (LQVPLSPPPPSTRQQQLPPRP). Residues 50–66 (LSPPPPSTRQQQPPPRP) are compositionally biased toward pro residues. The TNase-like domain occupies 297–470 (KTLPVNAKCI…RDARQGLWAY (174 aa)). Aspartate 310 serves as a coordination point for Ca(2+). Residue arginine 377 is part of the active site. Aspartate 382 is a binding site for Ca(2+). Active-site residues include glutamate 385 and arginine 419.

Belongs to the thermonuclease family. Requires Ca(2+) as cofactor.

It is found in the cell membrane. Enzyme that catalyzes the hydrolysis of both DNA and RNA at the 5' position of the phosphodiester bond. The protein is Probable staphylococcal-like nuclease CAN4 of Oryza sativa subsp. japonica (Rice).